The chain runs to 132 residues: Methenyltetrahydromethanopterin cyclohydrolase (132 aa).

Belongs to the MCH family.

Its subcellular location is the cytoplasm. It carries out the reaction 5,10-methenyl-5,6,7,8-tetrahydromethanopterin + H2O = N(5)-formyl-5,6,7,8-tetrahydromethanopterin + H(+). It functions in the pathway one-carbon metabolism; formaldehyde degradation; formate from formaldehyde (H(4)MPT route): step 3/5. Functionally, catalyzes the hydrolysis of methenyl-H(4)MPT(+) to 5-formyl-H(4)MPT. This Methylomonas rubra protein is Methenyltetrahydromethanopterin cyclohydrolase (mch).